The primary structure comprises 476 residues: Argininosuccinate lyase (476 aa).

The protein belongs to the lyase 1 family. Argininosuccinate lyase subfamily.

The protein localises to the cytoplasm. It catalyses the reaction 2-(N(omega)-L-arginino)succinate = fumarate + L-arginine. It participates in amino-acid biosynthesis; L-arginine biosynthesis; L-arginine from L-ornithine and carbamoyl phosphate: step 3/3. In Thermobifida fusca (strain YX), this protein is Argininosuccinate lyase.